The following is a 480-amino-acid chain: Glutamyl-tRNA(Gln) amidotransferase subunit A (480 aa).

Active-site charge relay system residues include Lys-70 and Ser-145. Residue Ser-169 is the Acyl-ester intermediate of the active site.

The protein belongs to the amidase family. GatA subfamily. In terms of assembly, heterotrimer of A, B and C subunits.

The catalysed reaction is L-glutamyl-tRNA(Gln) + L-glutamine + ATP + H2O = L-glutaminyl-tRNA(Gln) + L-glutamate + ADP + phosphate + H(+). In terms of biological role, allows the formation of correctly charged Gln-tRNA(Gln) through the transamidation of misacylated Glu-tRNA(Gln) in organisms which lack glutaminyl-tRNA synthetase. The reaction takes place in the presence of glutamine and ATP through an activated gamma-phospho-Glu-tRNA(Gln). The sequence is that of Glutamyl-tRNA(Gln) amidotransferase subunit A from Lactobacillus delbrueckii subsp. bulgaricus (strain ATCC BAA-365 / Lb-18).